The sequence spans 833 residues: Leucine--tRNA ligase (833 aa).

Residues 41-52 (PYPSGAGLHVGH) carry the 'HIGH' region motif. The 'KMSKS' region motif lies at 610–614 (KMSKS). Lys613 provides a ligand contact to ATP.

This sequence belongs to the class-I aminoacyl-tRNA synthetase family.

Its subcellular location is the cytoplasm. The enzyme catalyses tRNA(Leu) + L-leucine + ATP = L-leucyl-tRNA(Leu) + AMP + diphosphate. The chain is Leucine--tRNA ligase from Streptococcus equi subsp. zooepidemicus (strain MGCS10565).